Here is a 190-residue protein sequence, read N- to C-terminus: Shikimate kinase (190 aa).

13-18 (GAGKTT) contacts ATP. Residue threonine 17 participates in Mg(2+) binding. Positions 35, 59, and 81 each coordinate substrate. Arginine 119 provides a ligand contact to ATP. Arginine 138 is a binding site for substrate.

It belongs to the shikimate kinase family. Monomer. It depends on Mg(2+) as a cofactor.

It is found in the cytoplasm. The catalysed reaction is shikimate + ATP = 3-phosphoshikimate + ADP + H(+). It participates in metabolic intermediate biosynthesis; chorismate biosynthesis; chorismate from D-erythrose 4-phosphate and phosphoenolpyruvate: step 5/7. Its function is as follows. Catalyzes the specific phosphorylation of the 3-hydroxyl group of shikimic acid using ATP as a cosubstrate. The chain is Shikimate kinase from Ralstonia nicotianae (strain ATCC BAA-1114 / GMI1000) (Ralstonia solanacearum).